Here is a 236-residue protein sequence, read N- to C-terminus: DNA repair protein RecO (236 aa).

The protein belongs to the RecO family.

Functionally, involved in DNA repair and RecF pathway recombination. The polypeptide is DNA repair protein RecO (Rickettsia typhi (strain ATCC VR-144 / Wilmington)).